The chain runs to 311 residues: Solute carrier family 25 member 48 (311 aa).

Solcar repeat units follow at residues 3–86, 100–205, and 214–301; these read NFQL…TQRF, PHVL…LSDW, and PSPC…SLQA. The next 6 membrane-spanning stretches (helical) occupy residues 9-29, 61-81, 107-127, 193-213, 217-237, and 277-295; these read FVAG…LDTV, GMSF…GVFS, LLAS…VDLI, CLYF…ACAG, CAVW…ATPM, and ITVN…FLGY.

This sequence belongs to the mitochondrial carrier (TC 2.A.29) family.

The protein resides in the mitochondrion inner membrane. The protein is Solute carrier family 25 member 48 (SLC25A48) of Bos taurus (Bovine).